Reading from the N-terminus, the 127-residue chain is Odontogenesis-associated phosphoprotein (127 aa).

Residues 1 to 23 form the signal peptide; that stretch reads MAPGFHFSWLLVSWLVVTTVKGQ.

Expressed in enamel organs and not expressed in the heart, kidney, or spleen.

It localises to the secreted. Its function is as follows. May promote nucleation of hydroxyapatite. The chain is Odontogenesis-associated phosphoprotein from Rattus norvegicus (Rat).